The following is a 155-amino-acid chain: Sweet protein mabinlin-2 (155 aa).

The signal sequence occupies residues 1 to 20 (MAKLIFLFATLALFVLLANA). The propeptide occupies 21–35 (SIQTTVIEVDEEEDN). Pyrrolidone carboxylic acid is present on Gln36. 4 cysteine pairs are disulfide-bonded: Cys40–Cys103, Cys53–Cys92, Cys93–Cys141, and Cys105–Cys149. The segment at 64 to 86 (GGQPDELEDEVEDDNDDENQPRR) is disordered. A compositionally biased stretch (acidic residues) spans 68–81 (DELEDEVEDDNDDE). The propeptide occupies 69–82 (ELEDEVEDDNDDEN). Gln83 carries the post-translational modification Pyrrolidone carboxylic acid. Pro155 is a propeptide.

Belongs to the 2S seed storage albumins family. In terms of assembly, heterodimer of a small A and a large B chain linked by disulfide bonds.

Its function is as follows. Heat stable 2S seed storage protein having sweetness-inducing activity. In Capparis masaikai (Mabinlang), this protein is Sweet protein mabinlin-2.